The following is a 137-amino-acid chain: Urease subunit beta (137 aa).

Residues 113-137 (NGHPNAGVKNDEGKQNANKESGDNR) are disordered.

It belongs to the urease beta subunit family. As to quaternary structure, heterotrimer of UreA (gamma), UreB (beta) and UreC (alpha) subunits. Three heterotrimers associate to form the active enzyme.

It is found in the cytoplasm. The enzyme catalyses urea + 2 H2O + H(+) = hydrogencarbonate + 2 NH4(+). It functions in the pathway nitrogen metabolism; urea degradation; CO(2) and NH(3) from urea (urease route): step 1/1. The protein is Urease subunit beta of Staphylococcus carnosus (strain TM300).